Reading from the N-terminus, the 507-residue chain is AMSH-like ubiquitin thioesterase 1 (507 aa).

Positions 333–463 (LHIATSMMDT…IFRLTTPGGM (131 aa)) constitute an MPN domain. Positions 411, 413, 424, 426, 469, 475, and 477 each coordinate Zn(2+). A JAMM motif motif is present at residues 411 to 424 (HTHPTQSCFMSSID).

The protein belongs to the peptidase M67C family. Zn(2+) is required as a cofactor.

The protein localises to the membrane. It localises to the cytoplasm. Functionally, zinc metalloprotease that cleaves 'Lys-48'- and 'Lys-63'-linked polyubiquitin chains. This Arabidopsis thaliana (Mouse-ear cress) protein is AMSH-like ubiquitin thioesterase 1 (AMSH1).